Here is a 488-residue protein sequence, read N- to C-terminus: Calcium/calmodulin-dependent protein kinase type II subunit delta (488 aa).

Position 2 is an N-acetylalanine (Ala2). The Protein kinase domain maps to 14-272 (YQLFEELGKG…ASEALKHPWI (259 aa)). ATP contacts are provided by residues 20–28 (LGKGAFSVV) and Lys43. Residue Asp136 is the Proton acceptor of the active site. The interval 283–292 (HRQETVDCLK) is autoinhibitory domain. Thr287 carries the post-translational modification Phosphothreonine; by autocatalysis. The segment at 291-301 (LKKFNARRKLK) is calmodulin-binding. Residues Thr306 and Thr307 each carry the phosphothreonine; by autocatalysis modification. Ser315 is modified (phosphoserine). Position 317 is an N6-acetyllysine (Lys317). 2 positions are modified to phosphoserine: Ser318 and Ser340. A disordered region spans residues 325–350 (GVKKRKSSSSVQMMESTESSNTTIED). Positions 332–347 (SSSVQMMESTESSNTT) are enriched in polar residues. Thr341 bears the Phosphothreonine mark. A Phosphoserine modification is found at Ser343. Phosphothreonine occurs at positions 346 and 347. Phosphoserine is present on Ser414.

Belongs to the protein kinase superfamily. CAMK Ser/Thr protein kinase family. CaMK subfamily. CAMK2 is composed of 4 different chains: alpha (CAMK2A), beta (CAMK2B), gamma (CAMK2G), and delta (CAMK2D). The different isoforms assemble into homo- or heteromultimeric holoenzymes composed of 12 subunits with two hexameric rings stacked one on top of the other. Interacts with RRAD and CACNB2. Autophosphorylation of Thr-287 following activation by Ca(2+)/calmodulin. Phosphorylation of Thr-287 locks the kinase into an activated state.

The protein resides in the cell membrane. It localises to the sarcolemma. It is found in the sarcoplasmic reticulum membrane. The catalysed reaction is L-seryl-[protein] + ATP = O-phospho-L-seryl-[protein] + ADP + H(+). It carries out the reaction L-threonyl-[protein] + ATP = O-phospho-L-threonyl-[protein] + ADP + H(+). With respect to regulation, activated by Ca(2+)/calmodulin. Binding of calmodulin results in conformational change that relieves intrasteric autoinhibition and allows autophosphorylation of Thr-287 which turns the kinase in a constitutively active form and confers to the kinase a Ca(2+)-independent activity. Functionally, calcium/calmodulin-dependent protein kinase involved in the regulation of Ca(2+) homeostatis and excitation-contraction coupling (ECC) in heart by targeting ion channels, transporters and accessory proteins involved in Ca(2+) influx into the myocyte, Ca(2+) release from the sarcoplasmic reticulum (SR), SR Ca(2+) uptake and Na(+) and K(+) channel transport. Targets also transcription factors and signaling molecules to regulate heart function. In its activated form, is involved in the pathogenesis of dilated cardiomyopathy and heart failure. Contributes to cardiac decompensation and heart failure by regulating SR Ca(2+) release via direct phosphorylation of RYR2 Ca(2+) channel on 'Ser-2808'. In the nucleus, phosphorylates the MEF2 repressor HDAC4, promoting its nuclear export and binding to 14-3-3 protein, and expression of MEF2 and genes involved in the hypertrophic program. Is essential for left ventricular remodeling responses to myocardial infarction. In pathological myocardial remodeling acts downstream of the beta adrenergic receptor signaling cascade to regulate key proteins involved in ECC. Regulates Ca(2+) influx to myocytes by binding and phosphorylating the L-type Ca(2+) channel subunit beta-2 CACNB2. In addition to Ca(2+) channels, can target and regulate the cardiac sarcolemmal Na(+) channel Nav1.5/SCN5A and the K+ channel Kv4.3/KCND3, which contribute to arrhythmogenesis in heart failure. Phosphorylates phospholamban (PLN/PLB), an endogenous inhibitor of SERCA2A/ATP2A2, contributing to the enhancement of SR Ca(2+) uptake that may be important in frequency-dependent acceleration of relaxation (FDAR) and maintenance of contractile function during acidosis. May participate in the modulation of skeletal muscle function in response to exercise, by regulating SR Ca(2+) transport through phosphorylation of PLN/PLB and triadin, a ryanodine receptor-coupling factor. In response to interferon-gamma (IFN-gamma) stimulation, catalyzes phosphorylation of STAT1, stimulating the JAK-STAT signaling pathway. This is Calcium/calmodulin-dependent protein kinase type II subunit delta (CAMK2D) from Bos taurus (Bovine).